An 86-amino-acid polypeptide reads, in one-letter code: Cell division topological specificity factor (86 aa).

Belongs to the MinE family.

In terms of biological role, prevents the cell division inhibition by proteins MinC and MinD at internal division sites while permitting inhibition at polar sites. This ensures cell division at the proper site by restricting the formation of a division septum at the midpoint of the long axis of the cell. The polypeptide is Cell division topological specificity factor (Alteromonas mediterranea (strain DSM 17117 / CIP 110805 / LMG 28347 / Deep ecotype)).